Reading from the N-terminus, the 81-residue chain is Small ribosomal subunit protein bS16 (81 aa).

It belongs to the bacterial ribosomal protein bS16 family.

In Nautilia profundicola (strain ATCC BAA-1463 / DSM 18972 / AmH), this protein is Small ribosomal subunit protein bS16.